A 122-amino-acid polypeptide reads, in one-letter code: Flagellar protein FliT (122 aa).

The interval 1–50 is required for homodimerization; the sequence is MTSTVEFINRWQRIALLSQSLLELAQRGEWELLLQQEVSYLQSIETVMEK. The fliD binding stretch occupies residues 60 to 98; the sequence is IQDMVAGYIKQTLDNEQRLKGLLQQRLDELSGLIGQSTR.

This sequence belongs to the FliT family. Homodimer. Interacts with FliD and FlhC.

It localises to the cytoplasm. The protein localises to the cytosol. Its function is as follows. Dual-function protein that regulates the transcription of class 2 flagellar operons and that also acts as an export chaperone for the filament-capping protein FliD. As a transcriptional regulator, acts as an anti-FlhDC factor; it directly binds FlhC, thus inhibiting the binding of the FlhC/FlhD complex to class 2 promoters, resulting in decreased expression of class 2 flagellar operons. As a chaperone, effects FliD transition to the membrane by preventing its premature polymerization, and by directing it to the export apparatus. In Salmonella arizonae (strain ATCC BAA-731 / CDC346-86 / RSK2980), this protein is Flagellar protein FliT.